A 505-amino-acid chain; its full sequence is Betaine aldehyde dehydrogenase (505 aa).

239–244 (GSTATG) lines the NAD(+) pocket. Glutamate 261 acts as the Proton acceptor in catalysis. Residue cysteine 296 is the Nucleophile of the active site. Residues 503 to 505 (SKL) carry the Microbody targeting signal motif.

This sequence belongs to the aldehyde dehydrogenase family. In terms of assembly, homodimer.

The protein resides in the peroxisome. The catalysed reaction is betaine aldehyde + NAD(+) + H2O = glycine betaine + NADH + 2 H(+). The protein operates within amine and polyamine biosynthesis; betaine biosynthesis via choline pathway; betaine from betaine aldehyde: step 1/1. The polypeptide is Betaine aldehyde dehydrogenase (Hordeum vulgare (Barley)).